A 112-amino-acid polypeptide reads, in one-letter code: UstYa family oxidase VicYb (112 aa).

2 short sequence motifs (HXXHC) span residues 9-13 and 36-40; these read HYLHC and HLDHC.

The protein belongs to the ustYa family.

It participates in mycotoxin biosynthesis. In terms of biological role, ustYa family oxidase, part of the gene cluster that mediates the biosynthesis of the secondary metabolite victorin, the molecular basis for Victoria blight of oats. Within the pathway, vicYb catalyzes the oxidative cyclization of the core peptide. The pathway starts with the processing of the precursor vicA1 by several endopeptidases including kexin proteases as well as the cluster-specific S28 family peptidases vicPa and vicPb to produce 7 identical copies of the hexapeptide Gly-Leu-Lys-Leu-Ala-Phe. After being excised from the precursor peptide, the core peptides are cyclized and modified post-translationally by enzymes encoded within the gene cluster. The ustYa family oxidase vicYb is required for the formation of the macrocycle in victorin and the copper amine oxidases (CAOs) vicK1 and vicK2 are responsible for converting victorin to the active form by oxidizing the N-terminal glycyl residue in the peptides to glyoxylate. Relaxed substrate specificity of enzymes in the victorin biosynthetic pathway results in a metabolic grid that produces a set of analogs including victorinines B, C, E or HV-toxin M. This is UstYa family oxidase VicYb from Bipolaris victoriae (strain FI3) (Victoria blight of oats agent).